The chain runs to 29 residues: Trypsin inhibitor 5 (29 aa).

Intrachain disulfides connect cysteine 3–cysteine 20, cysteine 10–cysteine 22, and cysteine 16–cysteine 28.

It belongs to the protease inhibitor I7 (squash-type serine protease inhibitor) family.

It localises to the secreted. Its function is as follows. Strongly inhibits trypsin, weakly inhibits chymotrypsin. This Cyclanthera pedata (Achocha) protein is Trypsin inhibitor 5.